The primary structure comprises 715 residues: Myosin light chain kinase 3 (715 aa).

The disordered stretch occupies residues 67-114; the sequence is VTLPNDPSSQHSPEAHTGASEPLKPVSAGESSKALQKAKEISVKSSEP. The region spanning 404–659 is the Protein kinase domain; sequence VNPVEVLGGG…ASGCMKHSWL (256 aa). Residues 410–418 and K433 contribute to the ATP site; that span reads LGGGRFGQV. The active-site Proton acceptor is the D525.

It belongs to the protein kinase superfamily. CAMK Ser/Thr protein kinase family. Mg(2+) is required as a cofactor. Phosphorylated on serine residues.

The protein localises to the cytoplasm. The enzyme catalyses L-seryl-[myosin light chain] + ATP = O-phospho-L-seryl-[myosin light chain] + ADP + H(+). The catalysed reaction is L-threonyl-[myosin light chain] + ATP = O-phospho-L-threonyl-[myosin light chain] + ADP + H(+). Its function is as follows. Kinase that phosphorylates MYL2 in vitro. Increases cardiomyocyte contractility. Required for sarcomere formation in the developing heart. This Danio rerio (Zebrafish) protein is Myosin light chain kinase 3 (mylk3).